A 429-amino-acid polypeptide reads, in one-letter code: MAGSGAWKRLKSMLRKDDAPLFLNDTSAFDFSDEVGDEGLSRFNKLRVVVADDGSEAPERPANGAHSALQADDDSLLDQDLPLTNSQLSLKADPCDNCSKQRELLKQRKVKTRLTIAAVLYLLFMIGELVGGYIANSLAIMTDALHMLTDLSAIILTLLALWLSSKSPTKRFTFGFHRLEVLSAMISVLLVYILMGFLLYEAVQRTIHMKYEINGDIMLITAAIGVAVNVIMGFLLNQSGHHHAHSHSLPSNSPTTGPRCGHNQGQDSLAVRAAFVHALGDLVQSVGVLIAAYIIRFKPEYRIADPICTYVFSLLVAFTTFRIIWDTVVIILEGVPSHLNVDYIKEALMKIEDVHSVEDLNIWSLTSGKPTAIVHIQLIPGSSSKWEEVQSKAKHLLLNTFGMYKCTIQLQSYRQEVNRTCANCQSSSS.

The Cytoplasmic segment spans residues 1–113 (MAGSGAWKRL…LLKQRKVKTR (113 aa)). A helical transmembrane segment spans residues 114–134 (LTIAAVLYLLFMIGELVGGYI). Residues 135-143 (ANSLAIMTD) lie on the Lumenal side of the membrane. The helical transmembrane segment at 144-164 (ALHMLTDLSAIILTLLALWLS) threads the bilayer. Zn(2+)-binding residues include His-146 and Asp-150. At 165–178 (SKSPTKRFTFGFHR) the chain is on the cytoplasmic side. The chain crosses the membrane as a helical span at residues 179–199 (LEVLSAMISVLLVYILMGFLL). Residues 200–216 (YEAVQRTIHMKYEINGD) lie on the Lumenal side of the membrane. The chain crosses the membrane as a helical span at residues 217–237 (IMLITAAIGVAVNVIMGFLLN). Over 238 to 274 (QSGHHHAHSHSLPSNSPTTGPRCGHNQGQDSLAVRAA) the chain is Cytoplasmic. The interval 240–264 (GHHHAHSHSLPSNSPTTGPRCGHNQ) is zinc binding. Residues 275-295 (FVHALGDLVQSVGVLIAAYII) traverse the membrane as a helical segment. Zn(2+) is bound by residues His-277 and Asp-281. Topologically, residues 296-310 (RFKPEYRIADPICTY) are lumenal. A helical transmembrane segment spans residues 311–331 (VFSLLVAFTTFRIIWDTVVII). The Cytoplasmic segment spans residues 332-429 (LEGVPSHLNV…TCANCQSSSS (98 aa)).

This sequence belongs to the cation diffusion facilitator (CDF) transporter (TC 2.A.4) family. SLC30A subfamily. As to quaternary structure, homodimerization could regulate efficiency for zinc transport. Interacts with TMEM163.

Its subcellular location is the endosome membrane. The protein localises to the late endosome membrane. The protein resides in the lysosome membrane. It carries out the reaction Zn(2+)(in) + 2 H(+)(out) = Zn(2+)(out) + 2 H(+)(in). In terms of biological role, probable proton-coupled zinc ion antiporter mediating zinc import from cytoplasm potentially into the endocytic compartment. Controls zinc deposition in milk. This Bos taurus (Bovine) protein is Probable proton-coupled zinc antiporter SLC30A4.